We begin with the raw amino-acid sequence, 220 residues long: ATP-dependent Clp protease proteolytic subunit (220 aa).

Ser125 functions as the Nucleophile in the catalytic mechanism. The active site involves His150.

This sequence belongs to the peptidase S14 family. As to quaternary structure, fourteen ClpP subunits assemble into 2 heptameric rings which stack back to back to give a disk-like structure with a central cavity, resembling the structure of eukaryotic proteasomes.

The protein localises to the cytoplasm. The catalysed reaction is Hydrolysis of proteins to small peptides in the presence of ATP and magnesium. alpha-casein is the usual test substrate. In the absence of ATP, only oligopeptides shorter than five residues are hydrolyzed (such as succinyl-Leu-Tyr-|-NHMec, and Leu-Tyr-Leu-|-Tyr-Trp, in which cleavage of the -Tyr-|-Leu- and -Tyr-|-Trp bonds also occurs).. In terms of biological role, cleaves peptides in various proteins in a process that requires ATP hydrolysis. Has a chymotrypsin-like activity. Plays a major role in the degradation of misfolded proteins. The chain is ATP-dependent Clp protease proteolytic subunit from Bacteroides fragilis (strain YCH46).